Reading from the N-terminus, the 78-residue chain is Translational regulator CsrA (78 aa).

The protein belongs to the CsrA/RsmA family. As to quaternary structure, homodimer; the beta-strands of each monomer intercalate to form a hydrophobic core, while the alpha-helices form wings that extend away from the core.

The protein resides in the cytoplasm. In terms of biological role, a translational regulator that binds mRNA to regulate translation initiation and/or mRNA stability. Usually binds in the 5'-UTR at or near the Shine-Dalgarno sequence preventing ribosome-binding, thus repressing translation. Its main target seems to be the major flagellin gene, while its function is anatagonized by FliW. This Natranaerobius thermophilus (strain ATCC BAA-1301 / DSM 18059 / JW/NM-WN-LF) protein is Translational regulator CsrA.